The sequence spans 463 residues: Adenosylhomocysteinase (463 aa).

Residues threonine 54, aspartate 129, and glutamate 189 each contribute to the substrate site. 190 to 192 contacts NAD(+); that stretch reads TTT. Lysine 219 and aspartate 223 together coordinate substrate. NAD(+) is bound by residues asparagine 224, 253–258, glutamate 276, asparagine 311, 332–334, and asparagine 377; these read GYGDVG and IGH.

Belongs to the adenosylhomocysteinase family. NAD(+) serves as cofactor.

It localises to the cytoplasm. It carries out the reaction S-adenosyl-L-homocysteine + H2O = L-homocysteine + adenosine. Its pathway is amino-acid biosynthesis; L-homocysteine biosynthesis; L-homocysteine from S-adenosyl-L-homocysteine: step 1/1. In terms of biological role, may play a key role in the regulation of the intracellular concentration of adenosylhomocysteine. This Caulobacter vibrioides (strain ATCC 19089 / CIP 103742 / CB 15) (Caulobacter crescentus) protein is Adenosylhomocysteinase.